Reading from the N-terminus, the 352-residue chain is Cysteinyl leukotriene receptor 1 (352 aa).

Over 1–43 (MYLQGTKQTFLENMNGTENLTTSLINNTCHDTIDEFRNQVYST) the chain is Extracellular. 3 N-linked (GlcNAc...) asparagine glycosylation sites follow: Asn15, Asn19, and Asn26. The chain crosses the membrane as a helical span at residues 44–64 (MYSVISVVGFFGNSFVLYVLI). Over 65–72 (KTYHEKSA) the chain is Cytoplasmic. A helical transmembrane segment spans residues 73 to 93 (FQVYMINLAIADLLCVCTLPL). The Extracellular portion of the chain corresponds to 94–121 (RVVYYVHKGKWLFGDFLCRLTTYALYVN). A disulfide bridge links Cys111 with Cys188. A helical membrane pass occupies residues 122–142 (LYCSIFFMTAMSFFRCVAIVF). The Cytoplasmic segment spans residues 143-156 (PVQNINLVTQKKAR). A helical transmembrane segment spans residues 157-177 (FVCIGIWIFVILTSSPFLMYK). At 178-208 (SYQDEKNNTKCFEPPQNNQAKKYVLILHYVS) the chain is on the extracellular side. Asn184 is a glycosylation site (N-linked (GlcNAc...) asparagine). A helical membrane pass occupies residues 209–229 (LFFGFIIPFVTIIVCYTMIIL). Over 230-245 (TLLKNTMKKNMPSRRK) the chain is Cytoplasmic. The helical transmembrane segment at 246–266 (AIGMIIVVTAAFLVSFMPYHI) threads the bilayer. Residues 267-291 (QRTIHLHLLHSETRPCDSVLRMQKS) lie on the Extracellular side of the membrane. The helical transmembrane segment at 292–312 (VVITLSLAASNCCFDPLLYFF) threads the bilayer. The Cytoplasmic portion of the chain corresponds to 313 to 352 (SGGNFRRRLSTFRKHSLSSMTYVPKKKASLPEKGEEICNE).

It belongs to the G-protein coupled receptor 1 family. Widely expressed, with higher expression in the lung and skin, intermediate levels in the heart, kidney and stomach and lower levels in several other tissues. Isoform 1 is the most abundant form in all tested tissues.

Its subcellular location is the cell membrane. Receptor for cysteinyl leukotrienes mediating constriction of the microvascular smooth muscle during an inflammatory response. This response is mediated via a G-protein that activates a phosphatidylinositol-calcium second messenger system. The rank order of affinities for the leukotrienes is LTD4 &gt;&gt; LTE4 = LTC4 &gt;&gt; LTB4. This is Cysteinyl leukotriene receptor 1 (Cysltr1) from Mus musculus (Mouse).